A 122-amino-acid chain; its full sequence is MIQPQTHLNVADNSGARELMCIRIIGASHRRYAHIGDVIVAVIKDAVPNMPLERSEVVRAVIVRTCKELKRDNGMIIRYDDNAAVVIDQEGNPKGTRVFGAIARELRQFNFTKIVSLAPEVL.

Belongs to the universal ribosomal protein uL14 family. In terms of assembly, part of the 50S ribosomal subunit.

Its subcellular location is the plastid. The protein localises to the chloroplast. Its function is as follows. Binds to 23S rRNA. In Guizotia abyssinica (Niger), this protein is Large ribosomal subunit protein uL14c.